The sequence spans 251 residues: tRNA (guanine-N(1)-)-methyltransferase (251 aa).

Residues glycine 111 and 131 to 136 (LGDFVL) contribute to the S-adenosyl-L-methionine site.

It belongs to the RNA methyltransferase TrmD family. Homodimer.

The protein resides in the cytoplasm. The catalysed reaction is guanosine(37) in tRNA + S-adenosyl-L-methionine = N(1)-methylguanosine(37) in tRNA + S-adenosyl-L-homocysteine + H(+). Specifically methylates guanosine-37 in various tRNAs. This is tRNA (guanine-N(1)-)-methyltransferase from Synechococcus sp. (strain JA-2-3B'a(2-13)) (Cyanobacteria bacterium Yellowstone B-Prime).